A 556-amino-acid polypeptide reads, in one-letter code: Jerky protein homolog (556 aa).

Residues 11 to 62 (RGEKRKRVVLTLKEKIDICTRLEKGESRKALMQEYNVGMSTLYDIRAHKAQL) form the HTH psq-type domain. 2 consecutive DNA-binding regions (H-T-H motif) follow at residues 38-58 (RKAL…IRAH) and 110-142 (PMLI…FKAR). One can recognise an HTH CENPB-type domain in the interval 77-149 (QRRTLHTPKL…KARHGIKKLD (73 aa)). The region spanning 213 to 382 (KDRLTVLMCA…VPSHVFRRAW (170 aa)) is the DDE-1 domain. The residue at position 414 (S414) is a Phosphoserine. Residues 439-482 (SWGVAGREAEGGRPPAATSPAEVVWSSEKTPKADQDGRGDPGEG) are disordered. Over residues 467–479 (KTPKADQDGRGDP) the composition is skewed to basic and acidic residues.

Belongs to the tigger transposable element derived protein family. Expressed ubiquitously.

It is found in the nucleus. Functionally, may bind DNA. This chain is Jerky protein homolog, found in Homo sapiens (Human).